We begin with the raw amino-acid sequence, 428 residues long: 3-phosphoshikimate 1-carboxyvinyltransferase (428 aa).

Residues Lys22, Ser23, and Arg27 each coordinate 3-phosphoshikimate. Lys22 is a phosphoenolpyruvate binding site. Residues Gly95 and Arg123 each contribute to the phosphoenolpyruvate site. The 3-phosphoshikimate site is built by Ser170, Ser171, Gln172, Ser197, Asp316, and Lys343. Phosphoenolpyruvate is bound at residue Gln172. Asp316 (proton acceptor) is an active-site residue. 3 residues coordinate phosphoenolpyruvate: Arg347, Arg390, and Lys414.

It belongs to the EPSP synthase family. As to quaternary structure, monomer.

It localises to the cytoplasm. The enzyme catalyses 3-phosphoshikimate + phosphoenolpyruvate = 5-O-(1-carboxyvinyl)-3-phosphoshikimate + phosphate. It functions in the pathway metabolic intermediate biosynthesis; chorismate biosynthesis; chorismate from D-erythrose 4-phosphate and phosphoenolpyruvate: step 6/7. Catalyzes the transfer of the enolpyruvyl moiety of phosphoenolpyruvate (PEP) to the 5-hydroxyl of shikimate-3-phosphate (S3P) to produce enolpyruvyl shikimate-3-phosphate and inorganic phosphate. The sequence is that of 3-phosphoshikimate 1-carboxyvinyltransferase from Laribacter hongkongensis (strain HLHK9).